Reading from the N-terminus, the 396-residue chain is Probable sugar efflux transporter (396 aa).

12 consecutive transmembrane segments (helical) span residues 15 to 35 (VLIM…PVAM), 51 to 71 (GLMM…AMLA), 84 to 104 (LFII…FWIL), 109 to 129 (MCIA…VMRI), 137 to 157 (QALG…LPIG), 168 to 188 (VTFG…IRLL), 209 to 229 (PLLL…FTAY), 245 to 265 (NFAT…SLLF), 276 to 296 (FIVV…FSTE), 297 to 317 (TIIA…CIGL), 333 to 353 (VATA…ALFG), and 365 to 385 (IGYT…TTHL).

It belongs to the major facilitator superfamily. SotB (TC 2.A.1.2) family.

The protein resides in the cell inner membrane. Its function is as follows. Involved in the efflux of sugars. The physiological role may be the reduction of the intracellular concentration of toxic sugars or sugar metabolites. This Haemophilus influenzae (strain PittGG) protein is Probable sugar efflux transporter.